The sequence spans 435 residues: Tryptophan synthase beta chain (435 aa).

Lys-92 bears the N6-(pyridoxal phosphate)lysine mark.

Belongs to the TrpB family. Tetramer of two alpha and two beta chains. It depends on pyridoxal 5'-phosphate as a cofactor.

The enzyme catalyses (1S,2R)-1-C-(indol-3-yl)glycerol 3-phosphate + L-serine = D-glyceraldehyde 3-phosphate + L-tryptophan + H2O. It functions in the pathway amino-acid biosynthesis; L-tryptophan biosynthesis; L-tryptophan from chorismate: step 5/5. In terms of biological role, the beta subunit is responsible for the synthesis of L-tryptophan from indole and L-serine. This chain is Tryptophan synthase beta chain, found in Albidiferax ferrireducens (strain ATCC BAA-621 / DSM 15236 / T118) (Rhodoferax ferrireducens).